The following is a 94-amino-acid chain: MPAPIEVGRICVKTAGREAGKYCVVVDIVDENFVIITGPKDVTGVKRRRCNIKHLEPTPEKVDIDRGASDEEVKEALEEAGLLDLMKEGIVSGS.

This sequence belongs to the eukaryotic ribosomal protein eL14 family.

This Methanopyrus kandleri (strain AV19 / DSM 6324 / JCM 9639 / NBRC 100938) protein is Large ribosomal subunit protein eL14.